Reading from the N-terminus, the 484-residue chain is Adenylosuccinate lyase (484 aa).

An N-acetylalanine modification is found at A2. Residues 20–21 (RY), 85–87 (RHD), and 111–112 (TS) each bind substrate. K147 carries the N6-acetyllysine modification. H159 (proton donor/acceptor) is an active-site residue. Residue Q241 participates in substrate binding. The active-site Proton donor/acceptor is the S289. K295 carries the N6-acetyllysine modification. 4 residues coordinate substrate: R303, R329, S334, and R338. K415 is covalently cross-linked (Glycyl lysine isopeptide (Lys-Gly) (interchain with G-Cter in SUMO1)).

This sequence belongs to the lyase 1 family. Adenylosuccinate lyase subfamily. As to quaternary structure, homotetramer. Residues from neighboring subunits contribute catalytic and substrate-binding residues to each active site.

The enzyme catalyses N(6)-(1,2-dicarboxyethyl)-AMP = fumarate + AMP. The catalysed reaction is (2S)-2-[5-amino-1-(5-phospho-beta-D-ribosyl)imidazole-4-carboxamido]succinate = 5-amino-1-(5-phospho-beta-D-ribosyl)imidazole-4-carboxamide + fumarate. The protein operates within purine metabolism; AMP biosynthesis via de novo pathway; AMP from IMP: step 2/2. It participates in purine metabolism; IMP biosynthesis via de novo pathway; 5-amino-1-(5-phospho-D-ribosyl)imidazole-4-carboxamide from 5-amino-1-(5-phospho-D-ribosyl)imidazole-4-carboxylate: step 2/2. In terms of biological role, catalyzes two non-sequential steps in de novo AMP synthesis: converts (S)-2-(5-amino-1-(5-phospho-D-ribosyl)imidazole-4-carboxamido)succinate (SAICAR) to fumarate plus 5-amino-1-(5-phospho-D-ribosyl)imidazole-4-carboxamide, and thereby also contributes to de novo IMP synthesis, and converts succinyladenosine monophosphate (SAMP) to AMP and fumarate. The polypeptide is Adenylosuccinate lyase (ADSL) (Macaca fascicularis (Crab-eating macaque)).